The chain runs to 605 residues: Solute carrier family 23 member 1 (605 aa).

The segment at 1 to 30 (MKTPEDPGSPKQHEVVDSAGTSTRDRQAPL) is disordered. The Cytoplasmic segment spans residues 1–59 (MKTPEDPGSPKQHEVVDSAGTSTRDRQAPLPTEPKFDMLYKIEDVPPWYLCILLGFQHY). A helical membrane pass occupies residues 60–80 (LTCFSGTIAVPFLLAEALCVG). Residues 81-88 (RDQHMVSQ) lie on the Extracellular side of the membrane. A helical membrane pass occupies residues 89–109 (LIGTIFTCVGITTLIQTTVGI). Position 110 (Arg110) is a topological domain, cytoplasmic. The helical transmembrane segment at 111–131 (LPLFQASAFAFLVPAKSILAL) threads the bilayer. Residues 132–166 (ERWKCPSEEEIYGNWSMPLNTSHIWHPRIREVQGA) are Extracellular-facing. N-linked (GlcNAc...) asparagine glycosylation is found at Asn145 and Asn151. The chain crosses the membrane as a helical span at residues 167-187 (IMVSSMVEVVIGLMGLPGALL). The Cytoplasmic segment spans residues 188-214 (SYIGPLTVTPTVSLIGLSVFQAAGDRA). The helical transmembrane segment at 215 to 232 (GSHWGISACSILLIVLFS) threads the bilayer. Residues 233–236 (QYLR) are Extracellular-facing. The helical intramembrane region spans 237-250 (NLTFLLPVYRWGKG). The Extracellular segment spans residues 251 to 257 (LTLFRVQ). A helical transmembrane segment spans residues 258 to 278 (IFKMFPIVLAIMTVWLLCYVL). The Cytoplasmic segment spans residues 279-319 (TLTDVLPADPTVYGFQARTDARGDIMAISPWIRIPYPCQWG). The helical transmembrane segment at 320 to 340 (LPTVTVAAVLGMFSATLAGII) threads the bilayer. The Extracellular portion of the chain corresponds to 341-365 (ESIGDYYACARLAGAPPPPVHAINR). The helical transmembrane segment at 366 to 386 (GIFTEGICCIIAGLLGTGNGS) threads the bilayer. Residues 387–409 (TSSSPNIGVLGITKVGSRRVVQY) lie on the Cytoplasmic side of the membrane. Residues 410–430 (GAGIMLILGAIGKFTALFASL) traverse the membrane as a helical segment. Topologically, residues 431 to 433 (PDP) are extracellular. The chain crosses the membrane as a helical span at residues 434–454 (ILGGMFCTLFGMITAVGLSNL). The Cytoplasmic portion of the chain corresponds to 455 to 464 (QFVDMNSSRN). A helical membrane pass occupies residues 465–485 (LFVLGFSMFFGLTLPNYLDSN). Over 486–497 (PGAINTGIPEVD) the chain is Extracellular. The chain crosses the membrane as a helical span at residues 498–518 (QILTVLLTTEMFVGGCLAFIL). Residues 519–605 (DNTVPGSPEE…IETGSVCTKV (87 aa)) lie on the Cytoplasmic side of the membrane. Phosphothreonine is present on Thr598. Ser600 is subject to Phosphoserine. Thr603 carries the phosphothreonine modification.

Belongs to the nucleobase:cation symporter-2 (NCS2) (TC 2.A.40) family. Post-translationally, phosphorylated. As to expression, expressed in kidney (at protein level).

It is found in the cell membrane. The catalysed reaction is L-ascorbate(out) + 2 Na(+)(out) = L-ascorbate(in) + 2 Na(+)(in). The enzyme catalyses urate(out) + 2 Na(+)(out) = urate(in) + 2 Na(+)(in). Its function is as follows. Sodium:L-ascorbate cotransporter. Mediates electrogenic uptake of vitamin C, with a stoichiometry of 2 Na(+) for each L-ascorbate. Has retained some ancestral activity toward nucleobases such as urate, an oxidized purine. Low-affinity high-capacity sodium:urate cotransporter, may regulate serum urate levels by serving as a renal urate re-absorber. The polypeptide is Solute carrier family 23 member 1 (Slc23a1) (Mus musculus (Mouse)).